The sequence spans 158 residues: Serglycin (158 aa).

The signal sequence occupies residues 1–27; sequence MMQKLLKCSRLVLALALILVLESSVQG. An intrachain disulfide couples Cys40 to Cys49. Ser94 and Ser96 each carry an O-linked (Xyl...) (glycosaminoglycan) serine glycan. Tandem repeats lie at residues 94 to 95, 96 to 97, 98 to 99, 100 to 101, 102 to 103, 104 to 105, 106 to 107, 108 to 109, and 110 to 111. Residues 94–111 are 9 X 2 AA tandem repeats of [SF]-G; that stretch reads SGSGFGSGSGSGSGSGSG. Ser100, Ser102, Ser104, Ser106, Ser108, and Ser110 each carry an O-linked (Xyl...) (glycosaminoglycan) serine glycan. Residues 134-158 form a disordered region; sequence RSLDRNLPSDSQDLGQHGLEEDFML.

The protein belongs to the serglycin family. In terms of assembly, binds to activated CD44 and to GZMB. In terms of processing, O-glycosylated; contains chondroitin sulfate and heparan sulfate.

The protein localises to the cytoplasmic granule. It localises to the cytolytic granule. The protein resides in the secreted. It is found in the extracellular space. Its subcellular location is the golgi apparatus. Functionally, plays a role in formation of mast cell secretory granules and mediates storage of various compounds in secretory vesicles. Required for storage of some proteases in both connective tissue and mucosal mast cells and for storage of granzyme B in T-lymphocytes. Plays a role in localizing neutrophil elastase in azurophil granules of neutrophils. Mediates processing of MMP2. Plays a role in cytotoxic cell granule-mediated apoptosis by forming a complex with granzyme B which is delivered to cells by perforin to induce apoptosis. Regulates the secretion of TNF-alpha and may also regulate protease secretion. Inhibits bone mineralization. The polypeptide is Serglycin (SRGN) (Homo sapiens (Human)).